The following is an 88-amino-acid chain: Exodeoxyribonuclease 7 small subunit (88 aa).

The protein belongs to the XseB family. Heterooligomer composed of large and small subunits.

It is found in the cytoplasm. The catalysed reaction is Exonucleolytic cleavage in either 5'- to 3'- or 3'- to 5'-direction to yield nucleoside 5'-phosphates.. Functionally, bidirectionally degrades single-stranded DNA into large acid-insoluble oligonucleotides, which are then degraded further into small acid-soluble oligonucleotides. This is Exodeoxyribonuclease 7 small subunit from Tolumonas auensis (strain DSM 9187 / NBRC 110442 / TA 4).